The sequence spans 321 residues: UPF0026 protein MJ1312 (321 aa).

Residues 11 to 236 (RRLGKSLGIN…AIFNEIIGKN (226 aa)) form the Radical SAM core domain. [4Fe-4S] cluster-binding residues include Cys27, Cys31, and Cys34.

This sequence belongs to the UPF0026 family. The cofactor is [4Fe-4S] cluster.

The polypeptide is UPF0026 protein MJ1312 (Methanocaldococcus jannaschii (strain ATCC 43067 / DSM 2661 / JAL-1 / JCM 10045 / NBRC 100440) (Methanococcus jannaschii)).